Here is a 179-residue protein sequence, read N- to C-terminus: Apoptosis regulator DPV022 (179 aa).

A helical transmembrane segment spans residues 148–170; it reads VLITNYLKITIFGAILGITAYYI.

In terms of assembly, interacts with host BAX and BAK1.

It is found in the host mitochondrion. It localises to the host membrane. Functionally, plays a role in the inhibition of host apoptosis by sequestering and inactivating several proapoptotic BCL-2 proteins, including BAK1 and BAX. Prevents the conformational activation of both of them. This is Apoptosis regulator DPV022 (DPV022) from Deerpox virus (strain Mule deer/United States/W-848-83/1983) (DPV).